Consider the following 885-residue polypeptide: Alanine--tRNA ligase (885 aa).

Zn(2+) contacts are provided by His-572, His-576, Cys-675, and His-679.

The protein belongs to the class-II aminoacyl-tRNA synthetase family. It depends on Zn(2+) as a cofactor.

It is found in the cytoplasm. It catalyses the reaction tRNA(Ala) + L-alanine + ATP = L-alanyl-tRNA(Ala) + AMP + diphosphate. Catalyzes the attachment of alanine to tRNA(Ala) in a two-step reaction: alanine is first activated by ATP to form Ala-AMP and then transferred to the acceptor end of tRNA(Ala). Also edits incorrectly charged Ser-tRNA(Ala) and Gly-tRNA(Ala) via its editing domain. The protein is Alanine--tRNA ligase of Leifsonia xyli subsp. xyli (strain CTCB07).